Reading from the N-terminus, the 503-residue chain is Podocalyxin (503 aa).

Positions 1–21 (MPPTTALSALLLLLLSPASHS) are cleaved as a signal peptide. The disordered stretch occupies residues 19–236 (SHSHNGNETS…PLTSQTPGIT (218 aa)). A compositionally biased stretch (polar residues) spans 20–50 (HSHNGNETSTSAIKSSTVQSHQSATTSTEVT). Topologically, residues 22–404 (HNGNETSTSA…PPEVNEDRFS (383 aa)) are extracellular. Asn25, Asn89, and Asn94 each carry an N-linked (GlcNAc...) asparagine glycan. Residues 61–91 (STQPSNPTPFTTSTQSPSMPTSTPNPTSNQS) show a composition bias toward low complexity. The segment covering 107–126 (TSSPSSTAFTSSSGQTASSG) has biased composition (low complexity). A compositionally biased stretch (polar residues) spans 131–183 (DSFTTAPTTTLGLINVSSQPTDLNTTSKLLSTPTTDNTTSPQQPVDSSPSTAS). Asn145, Asn154, Asn167, and Asn206 each carry an N-linked (GlcNAc...) asparagine glycan. Residues 196–208 (SSSGSTPSTDNST) show a composition bias toward low complexity. Residues 222 to 236 (SEATQPLTSQTPGIT) show a composition bias toward polar residues. Asn303 is a glycosylation site (N-linked (GlcNAc...) asparagine). Residues 405–425 (LPLIITIVCMASFLLLVAALY) traverse the membrane as a helical segment. The Cytoplasmic segment spans residues 426–503 (GCCHQRISQR…DLDEEEDTHL (78 aa)). Thr463 carries the phosphothreonine modification. Residue Ser482 is modified to Phosphoserine. The residue at position 501 (Thr501) is a Phosphothreonine.

It belongs to the podocalyxin family. In terms of assembly, monomer; when associated with the membrane raft. Oligomer; when integrated in the apical membrane. Found in a complex with EZR, PODXL and NHERF2. Associates with the actin cytoskeleton through complex formation with EZR and NHERF2. Interacts (via the C-terminal PDZ-binding motif DTHL) with NHERF1 (via the PDZ domains); interaction is not detected in glomerular epithelium cells, take place early in the secretory pathway and is necessary for its apical membrane sorting. Interacts (via the C-terminal PDZ-binding motif DTHL) with NHERF2 (via the PDZ 1 domain); interaction is detected in glomerular epithelium cells. Interacts with EZR. Post-translationally, N- and O-linked glycosylated. Sialoglycoprotein. In terms of tissue distribution, expressed in liver cells and hematopoietic cells (at protein level). Glomerular epithelium cell (podocyte).

The protein resides in the apical cell membrane. It localises to the cell projection. Its subcellular location is the microvillus. The protein localises to the membrane raft. It is found in the lamellipodium. The protein resides in the filopodium. It localises to the ruffle. Its subcellular location is the membrane. Functionally, involved in the regulation of both adhesion and cell morphology and cancer progression. Functions as an anti-adhesive molecule that maintains an open filtration pathway between neighboring foot processes in the podocyte by charge repulsion. Acts as a pro-adhesive molecule, enhancing the adherence of cells to immobilized ligands, increasing the rate of migration and cell-cell contacts in an integrin-dependent manner. Induces the formation of apical actin-dependent microvilli. Involved in the formation of a preapical plasma membrane subdomain to set up initial epithelial polarization and the apical lumen formation during renal tubulogenesis. Plays a role in cancer development and aggressiveness by inducing cell migration and invasion through its interaction with the actin-binding protein EZR. Affects EZR-dependent signaling events, leading to increased activities of the MAPK and PI3K pathways in cancer cells. The protein is Podocalyxin (Podxl) of Mus musculus (Mouse).